A 35-amino-acid chain; its full sequence is QKECTGPQHCTNFCRKNKCTHGKCMNRKCKCFNCK.

Position 1 is a pyrrolidone carboxylic acid (Gln1). Cystine bridges form between Cys4-Cys24, Cys10-Cys29, Cys14-Cys31, and Cys19-Cys34. Lys35 bears the Lysine amide mark.

Belongs to the short scorpion toxin superfamily. Potassium channel inhibitor family. Alpha-KTx 06 subfamily. In terms of assembly, monomer. In terms of tissue distribution, expressed by the venom gland.

It is found in the secreted. Its function is as follows. High affinity blocker of Kv1.3/KCNA3 channels of human T cells. Blocks Kv1.2/KCNA2 with an order of magnitude smaller than for Kv1.3/KCNA3. This Anuroctonus phaiodactylus (Mafia scorpion) protein is Potassium channel toxin alpha-KTx 6.12.